The chain runs to 93 residues: Aspartyl/glutamyl-tRNA(Asn/Gln) amidotransferase subunit C (93 aa).

This sequence belongs to the GatC family. Heterotrimer of A, B and C subunits.

It carries out the reaction L-glutamyl-tRNA(Gln) + L-glutamine + ATP + H2O = L-glutaminyl-tRNA(Gln) + L-glutamate + ADP + phosphate + H(+). It catalyses the reaction L-aspartyl-tRNA(Asn) + L-glutamine + ATP + H2O = L-asparaginyl-tRNA(Asn) + L-glutamate + ADP + phosphate + 2 H(+). Its function is as follows. Allows the formation of correctly charged Asn-tRNA(Asn) or Gln-tRNA(Gln) through the transamidation of misacylated Asp-tRNA(Asn) or Glu-tRNA(Gln) in organisms which lack either or both of asparaginyl-tRNA or glutaminyl-tRNA synthetases. The reaction takes place in the presence of glutamine and ATP through an activated phospho-Asp-tRNA(Asn) or phospho-Glu-tRNA(Gln). This Methanothrix thermoacetophila (strain DSM 6194 / JCM 14653 / NBRC 101360 / PT) (Methanosaeta thermophila) protein is Aspartyl/glutamyl-tRNA(Asn/Gln) amidotransferase subunit C.